Consider the following 339-residue polypeptide: Phosphoribosylformylglycinamidine cyclo-ligase (339 aa).

It belongs to the AIR synthase family.

Its subcellular location is the cytoplasm. The catalysed reaction is 2-formamido-N(1)-(5-O-phospho-beta-D-ribosyl)acetamidine + ATP = 5-amino-1-(5-phospho-beta-D-ribosyl)imidazole + ADP + phosphate + H(+). It participates in purine metabolism; IMP biosynthesis via de novo pathway; 5-amino-1-(5-phospho-D-ribosyl)imidazole from N(2)-formyl-N(1)-(5-phospho-D-ribosyl)glycinamide: step 2/2. This is Phosphoribosylformylglycinamidine cyclo-ligase from Streptococcus thermophilus (strain ATCC BAA-491 / LMD-9).